A 228-amino-acid chain; its full sequence is Cytidylate kinase (228 aa).

10–18 (GPSGSGKGT) is a binding site for ATP.

The protein belongs to the cytidylate kinase family. Type 1 subfamily.

The protein localises to the cytoplasm. The catalysed reaction is CMP + ATP = CDP + ADP. It catalyses the reaction dCMP + ATP = dCDP + ADP. The protein is Cytidylate kinase of Acinetobacter baumannii (strain ACICU).